The sequence spans 118 residues: uncharacterized protein (118 aa).

Positions 1–27 are cleaved as a signal peptide; that stretch reads MPIKEPDVWALIWSWLQTNLSSSSAQS.

This is an uncharacterized protein from Haemophilus influenzae (strain ATCC 51907 / DSM 11121 / KW20 / Rd).